Here is a 275-residue protein sequence, read N- to C-terminus: 2,3,4,5-tetrahydropyridine-2,6-dicarboxylate N-succinyltransferase (275 aa).

Substrate contacts are provided by R105 and D142.

It belongs to the transferase hexapeptide repeat family. In terms of assembly, homotrimer.

It localises to the cytoplasm. It catalyses the reaction (S)-2,3,4,5-tetrahydrodipicolinate + succinyl-CoA + H2O = (S)-2-succinylamino-6-oxoheptanedioate + CoA. Its pathway is amino-acid biosynthesis; L-lysine biosynthesis via DAP pathway; LL-2,6-diaminopimelate from (S)-tetrahydrodipicolinate (succinylase route): step 1/3. This chain is 2,3,4,5-tetrahydropyridine-2,6-dicarboxylate N-succinyltransferase, found in Pectobacterium atrosepticum (strain SCRI 1043 / ATCC BAA-672) (Erwinia carotovora subsp. atroseptica).